Consider the following 443-residue polypeptide: Ribosomal protein uS12 methylthiotransferase RimO (443 aa).

One can recognise an MTTase N-terminal domain in the interval 1 to 114 (MGFVSLGCPK…VMQAVHTHLP (114 aa)). [4Fe-4S] cluster is bound by residues Cys8, Cys44, Cys73, Cys145, Cys149, and Cys152. The Radical SAM core domain occupies 131-372 (LTPKHYAYLK…MEVAEEVSAR (242 aa)). The TRAM domain maps to 375–443 (QRKVGQTLRV…ADGHDLWGAV (69 aa)).

The protein belongs to the methylthiotransferase family. RimO subfamily. The cofactor is [4Fe-4S] cluster.

Its subcellular location is the cytoplasm. It catalyses the reaction L-aspartate(89)-[ribosomal protein uS12]-hydrogen + (sulfur carrier)-SH + AH2 + 2 S-adenosyl-L-methionine = 3-methylsulfanyl-L-aspartate(89)-[ribosomal protein uS12]-hydrogen + (sulfur carrier)-H + 5'-deoxyadenosine + L-methionine + A + S-adenosyl-L-homocysteine + 2 H(+). Its function is as follows. Catalyzes the methylthiolation of an aspartic acid residue of ribosomal protein uS12. The sequence is that of Ribosomal protein uS12 methylthiotransferase RimO from Cupriavidus necator (strain ATCC 17699 / DSM 428 / KCTC 22496 / NCIMB 10442 / H16 / Stanier 337) (Ralstonia eutropha).